The sequence spans 459 residues: Zinc finger transcription factor lin-29 (459 aa).

Residues 1–14 (MDQTVLDSAFNSPV) are compositionally biased toward polar residues. Residues 1 to 73 (MDQTVLDSAF…GSTGSTPAHH (73 aa)) form a disordered region. Low complexity predominate over residues 16–56 (SGIAGTTTGSGSTTHFGVGTNFKVSVRSSSRSTDGTDSTDG). Polar residues predominate over residues 57-73 (ANSDNVTGSTGSTPAHH). C2H2-type zinc fingers lie at residues 151 to 173 (YKCT…MRIH), 180 to 202 (GPCN…IRTH), 208 to 232 (YKCK…SRCH), 238 to 260 (FKCN…IPKH), and 269 to 291 (HICP…MTKH). Residues 390–406 (PGFNMITPLENIQRYNG) are interacts with mab-10. The segment covering 423–444 (VSSTPSSTSSSSAGSSSSQGGV) has biased composition (low complexity). Residues 423–459 (VSSTPSSTSSSSAGSSSSQGGVFNPQSLINNMKNHSY) form a disordered region. A compositionally biased stretch (polar residues) spans 446-459 (NPQSLINNMKNHSY).

Interacts (via C-terminus) with transcription cofactor mab-10. In terms of tissue distribution, expressed in lateral hypodermal seam cells (at protein level).

The protein resides in the nucleus. Functionally, transcription factor which regulates the expression of various genes, including those involved in cuticle synthesis and maintenance, such as collagens, and in lipid metabolism. Binds to promoter regions of genes, at 5'-[(T/G)TTTTTT(A/T/C/G)]-3' consensus sequences. Heterochronic protein which controls the choice of stage specific cell fates, including at the juvenile to adult transition. Promotes differentiation, together with transcriptional cofactor mab-10, perhaps as part of a transcriptional complex. Required for vulval morphogenesis and egg laying; perhaps by acting in a subset of the lateral seam cells. Involved in the exit of seam cells from the cell cycle. Required for specification of uterine pi-cell fate, acting upstream of lin-12 Notch signaling, perhaps via maintenance of lag-2 expression in the anchor cell (AC). Involved in morphogenesis of the specialized male tail used in mating. Acts cell non-autonomously from the hypodermis to regulate expression of genes in the intestine, including genes involved in lipid metabolism. May regulate vitellogenesis via the mTORC2 signaling mediated pathway, independently of daf-16. May promote nuclear accumulation of mab-10 in seam cells post-transcriptionally. Dispensable for seam cell fusion. Its function is as follows. Required for seam cell fusion. This chain is Zinc finger transcription factor lin-29, found in Caenorhabditis elegans.